Consider the following 253-residue polypeptide: Ubiquinone biosynthesis O-methyltransferase (253 aa).

Arginine 47, glycine 78, aspartate 99, and methionine 141 together coordinate S-adenosyl-L-methionine.

Belongs to the methyltransferase superfamily. UbiG/COQ3 family.

The enzyme catalyses a 3-demethylubiquinol + S-adenosyl-L-methionine = a ubiquinol + S-adenosyl-L-homocysteine + H(+). It catalyses the reaction a 3-(all-trans-polyprenyl)benzene-1,2-diol + S-adenosyl-L-methionine = a 2-methoxy-6-(all-trans-polyprenyl)phenol + S-adenosyl-L-homocysteine + H(+). The protein operates within cofactor biosynthesis; ubiquinone biosynthesis. O-methyltransferase that catalyzes the 2 O-methylation steps in the ubiquinone biosynthetic pathway. The chain is Ubiquinone biosynthesis O-methyltransferase from Rhodopseudomonas palustris (strain BisB5).